The primary structure comprises 158 residues: 3-hydroxyacyl-[acyl-carrier-protein] dehydratase FabZ (158 aa).

Histidine 60 is an active-site residue.

This sequence belongs to the thioester dehydratase family. FabZ subfamily.

It is found in the cytoplasm. The catalysed reaction is a (3R)-hydroxyacyl-[ACP] = a (2E)-enoyl-[ACP] + H2O. Functionally, involved in unsaturated fatty acids biosynthesis. Catalyzes the dehydration of short chain beta-hydroxyacyl-ACPs and long chain saturated and unsaturated beta-hydroxyacyl-ACPs. The chain is 3-hydroxyacyl-[acyl-carrier-protein] dehydratase FabZ from Zymomonas mobilis subsp. mobilis (strain ATCC 31821 / ZM4 / CP4).